The following is a 495-amino-acid chain: ATP synthase subunit beta, chloroplastic (495 aa).

172–179 (GGAGVGKT) provides a ligand contact to ATP.

Belongs to the ATPase alpha/beta chains family. F-type ATPases have 2 components, CF(1) - the catalytic core - and CF(0) - the membrane proton channel. CF(1) has five subunits: alpha(3), beta(3), gamma(1), delta(1), epsilon(1). CF(0) has four main subunits: a(1), b(1), b'(1) and c(9-12).

The protein resides in the plastid. It is found in the chloroplast thylakoid membrane. The enzyme catalyses ATP + H2O + 4 H(+)(in) = ADP + phosphate + 5 H(+)(out). Its function is as follows. Produces ATP from ADP in the presence of a proton gradient across the membrane. The catalytic sites are hosted primarily by the beta subunits. The protein is ATP synthase subunit beta, chloroplastic of Beaucarnea recurvata (Elephant-foot tree).